The primary structure comprises 524 residues: MLSTLRRTLFALLACASFIVHAAAPDEITTAWPVNVGPLNPHLYTPNQMFAQSMVYEPLVKYQADGSVIPWLAKSWTHSEDGKTWTFTLRDDVKFSNGEPFDAEAAAENFRAVLDNRQRHAWLELANQIVDVKALSKTELQITLKSAYYPFLQELALPRPFRFIAPSQFKNHETMNGIKAPIGTGPWILQESKLNQYDVFVRNENYWGEKPAIKKITFNVIPDPTTRAVAFETGDIDLLYGNEGLLPLDTFARFSQNPAYHTQLSQPIETVMLALNTAKAPTNELAVREALNYAVNKKSLIDNALYGTQQVADTLFAPSVPYANLGLKPSQYDPQKAKALLEKAGWTLPAGKDIREKNGQPLRIELSFIGTDALSKSMAEIIQADMRQIGADVSLIGEEESSIYARQRDGRFGMIFHRTWGAPYDPHAFLSSMRVPSHADFQAQQGLADKPLIDKEIGEVLATHDETQRQALYRDILTRLHDEAVYLPISYISMMVVSKPELGNIPYAPIATEIPFEQIKPVKP.

A signal peptide spans 1–22; sequence MLSTLRRTLFALLACASFIVHA.

The protein belongs to the bacterial solute-binding protein 5 family.

It is found in the periplasm. Involved in a nickel transport system, probably represents the nickel binder. The polypeptide is Nickel-binding periplasmic protein (nikA) (Escherichia coli (strain K12)).